Consider the following 275-residue polypeptide: Putative ankyrin repeat protein L715 (275 aa).

ANK repeat units follow at residues 94–123, 124–153, 155–183, and 184–213; these read NINY…DINY, NNGL…NTND, IFQL…SIDP, and IYST…SDST. Residues 253–275 form a disordered region; the sequence is NQDESDVGDDAENDIENDIEDDN. Acidic residues predominate over residues 255 to 275; sequence DESDVGDDAENDIENDIEDDN.

The protein is Putative ankyrin repeat protein L715 of Acanthamoeba polyphaga mimivirus (APMV).